The primary structure comprises 344 residues: N-acetyl-gamma-glutamyl-phosphate reductase (344 aa).

The active site involves cysteine 148.

This sequence belongs to the NAGSA dehydrogenase family. Type 1 subfamily.

It localises to the cytoplasm. The enzyme catalyses N-acetyl-L-glutamate 5-semialdehyde + phosphate + NADP(+) = N-acetyl-L-glutamyl 5-phosphate + NADPH + H(+). It functions in the pathway amino-acid biosynthesis; L-arginine biosynthesis; N(2)-acetyl-L-ornithine from L-glutamate: step 3/4. Catalyzes the NADPH-dependent reduction of N-acetyl-5-glutamyl phosphate to yield N-acetyl-L-glutamate 5-semialdehyde. The sequence is that of N-acetyl-gamma-glutamyl-phosphate reductase from Clostridium botulinum (strain Eklund 17B / Type B).